A 116-amino-acid polypeptide reads, in one-letter code: Nucleoid-associated protein A9601_00191 (116 aa).

This sequence belongs to the YbaB/EbfC family. In terms of assembly, homodimer.

Its subcellular location is the cytoplasm. The protein localises to the nucleoid. Binds to DNA and alters its conformation. May be involved in regulation of gene expression, nucleoid organization and DNA protection. The protein is Nucleoid-associated protein A9601_00191 of Prochlorococcus marinus (strain AS9601).